The primary structure comprises 652 residues: Acetyl-coenzyme A synthetase (652 aa).

Residues 191-194 (RAGR), threonine 311, and asparagine 335 contribute to the CoA site. ATP is bound by residues 387-389 (GEP), 411-416 (DTWWQT), aspartate 500, and arginine 515. Serine 523 is a binding site for CoA. Arginine 526 lines the ATP pocket. Residues valine 537, histidine 539, and isoleucine 542 each coordinate Mg(2+). Arginine 584 is a CoA binding site. Lysine 609 carries the post-translational modification N6-acetyllysine.

This sequence belongs to the ATP-dependent AMP-binding enzyme family. It depends on Mg(2+) as a cofactor. In terms of processing, acetylated. Deacetylation by the SIR2-homolog deacetylase activates the enzyme.

It catalyses the reaction acetate + ATP + CoA = acetyl-CoA + AMP + diphosphate. Catalyzes the conversion of acetate into acetyl-CoA (AcCoA), an essential intermediate at the junction of anabolic and catabolic pathways. Acs undergoes a two-step reaction. In the first half reaction, Acs combines acetate with ATP to form acetyl-adenylate (AcAMP) intermediate. In the second half reaction, it can then transfer the acetyl group from AcAMP to the sulfhydryl group of CoA, forming the product AcCoA. Its function is as follows. Enables the cell to use acetate during aerobic growth to generate energy via the TCA cycle, and biosynthetic compounds via the glyoxylate shunt. Acetylates CheY, the response regulator involved in flagellar movement and chemotaxis. The polypeptide is Acetyl-coenzyme A synthetase (Citrobacter koseri (strain ATCC BAA-895 / CDC 4225-83 / SGSC4696)).